The following is a 526-amino-acid chain: MSDFYQDFNKRRTFAIISHPDAGKTTVTEKLLLFGGAIQLAGTVKGRKADRHATSDWMEMEKERGISITTSVMQFIHNQHVINLLDTPGHEDFSEDTYRTLTAVDSALMVIDVAKGVEERTVKLMEVCRLRDTPIMTFINKLDREGREPIDLLDEVESVLGIQCAPITWPVGMGKRFKGIYHRYQDIIYLYQQGSNAKKVEAMQIKGLDNPQLDELIGDSADELREEIELVKGASHEFNLEAYLAGKMTPVYFGSAINNFGIKELLDDFVEYAPGPQPRATQERVVSPHEETFSGFVFKIQANMDPKHRDRIAFVRVCSGSYKKGMKLNHLRIGKEVQISNALTFMAGDRSHTELALAGDIIGLHNHGTIRIGDTFTQGEHLKFTGIPNFAPELFRLVRLRDPLKSKALLKGLIELSEEGATQVFRPLNSNQLILGAVGILQFDVVAHRLKHEYKVDCIYESVNIACARWVYSEDDKAMSEFRTKAYDYLALDGGDMLMYLAPTKVNLTMAEERYPKIKFCATREH.

The region spanning 9–277 (NKRRTFAIIS…DFVEYAPGPQ (269 aa)) is the tr-type G domain. GTP contacts are provided by residues 18–25 (SHPDAGKT), 86–90 (DTPGH), and 140–143 (NKLD).

Belongs to the TRAFAC class translation factor GTPase superfamily. Classic translation factor GTPase family. PrfC subfamily.

It localises to the cytoplasm. Its function is as follows. Increases the formation of ribosomal termination complexes and stimulates activities of RF-1 and RF-2. It binds guanine nucleotides and has strong preference for UGA stop codons. It may interact directly with the ribosome. The stimulation of RF-1 and RF-2 is significantly reduced by GTP and GDP, but not by GMP. The polypeptide is Peptide chain release factor 3 (Legionella pneumophila (strain Paris)).